Reading from the N-terminus, the 323-residue chain is Galactosylgalactosylxylosylprotein 3-beta-glucuronosyltransferase 2 (323 aa).

Residues 1–2 (MK) are Cytoplasmic-facing. A helical; Signal-anchor for type II membrane protein membrane pass occupies residues 3 to 23 (SALFTRFFILLPWILIVIIML). At 24-323 (DVDTRRPVPP…YHLDTVKIEV (300 aa)) the chain is on the lumenal side. The segment at 51–80 (RLPLRRGGPAHGTQKRNQSRPQPQPEPQLP) is disordered. A glycan (N-linked (GlcNAc...) asparagine) is linked at asparagine 67. Residues 87-89 (PTY), aspartate 118, arginine 155, arginine 160, and 185-187 (DDD) contribute to the UDP-alpha-D-glucuronate site. A Mn(2+)-binding site is contributed by aspartate 187. The tract at residues 234-243 (WRADRPFAID) is interaction with galactose moiety of substrate glycoprotein. The active-site Proton donor/acceptor is the glutamate 273. An N-linked (GlcNAc...) asparagine glycan is attached at asparagine 292. 300–302 (HTR) is a UDP-alpha-D-glucuronate binding site.

The protein belongs to the glycosyltransferase 43 family. In terms of assembly, homodimer. Mn(2+) serves as cofactor. Expressed in the trachea, retina, spinal cord, hippocampus and other brain regions, and, at lower levels, in testis and ovary.

Its subcellular location is the golgi apparatus membrane. It catalyses the reaction 3-O-(beta-D-galactosyl-(1-&gt;3)-beta-D-galactosyl-(1-&gt;4)-beta-D-xylosyl)-L-seryl-[protein] + UDP-alpha-D-glucuronate = 3-O-(beta-D-GlcA-(1-&gt;3)-beta-D-Gal-(1-&gt;3)-beta-D-Gal-(1-&gt;4)-beta-D-Xyl)-L-seryl-[protein] + UDP + H(+). The protein operates within protein modification; protein glycosylation. Functionally, involved in the biosynthesis of L2/HNK-1 carbohydrate epitope on both glycolipids and glycoproteins. The chain is Galactosylgalactosylxylosylprotein 3-beta-glucuronosyltransferase 2 (B3GAT2) from Homo sapiens (Human).